Here is a 438-residue protein sequence, read N- to C-terminus: DNA polymerase IV 1 (438 aa).

Residues 46 to 226 enclose the UmuC domain; the sequence is LAHIDCDAFY…KPVTMIWGVG (181 aa). Residues Asp-50 and Asp-143 each contribute to the Mg(2+) site. Glu-144 is an active-site residue.

It belongs to the DNA polymerase type-Y family. In terms of assembly, monomer. Mg(2+) serves as cofactor.

The protein localises to the cytoplasm. The catalysed reaction is DNA(n) + a 2'-deoxyribonucleoside 5'-triphosphate = DNA(n+1) + diphosphate. Functionally, poorly processive, error-prone DNA polymerase involved in untargeted mutagenesis. Copies undamaged DNA at stalled replication forks, which arise in vivo from mismatched or misaligned primer ends. These misaligned primers can be extended by PolIV. Exhibits no 3'-5' exonuclease (proofreading) activity. May be involved in translesional synthesis, in conjunction with the beta clamp from PolIII. This chain is DNA polymerase IV 1 (dinB1), found in Mesorhizobium japonicum (strain LMG 29417 / CECT 9101 / MAFF 303099) (Mesorhizobium loti (strain MAFF 303099)).